The sequence spans 310 residues: Olfactory receptor 8I2 (310 aa).

Topologically, residues 1–25 are extracellular; it reads MAGNNFTEVTVFILSGFANHPELQV. N-linked (GlcNAc...) asparagine glycosylation occurs at asparagine 5. The helical transmembrane segment at 26 to 46 threads the bilayer; it reads SLFLMFLFIYLFTVLGNLGLI. At 47-54 the chain is on the cytoplasmic side; it reads TLIRMDSQ. A helical membrane pass occupies residues 55 to 75; that stretch reads LHTPMYFFLSNLAFIDIFYSS. The Extracellular portion of the chain corresponds to 76 to 99; it reads TVTPKALVNFQSNRRSISFVGCFV. Cysteine 97 and cysteine 188 are oxidised to a cystine. The chain crosses the membrane as a helical span at residues 100–120; the sequence is QMYFFVGLVCCECFLLGSMAY. The Cytoplasmic portion of the chain corresponds to 121–139; that stretch reads NRYIAICNPLLYSVVMSQK. Residues 140-160 form a helical membrane-spanning segment; the sequence is VSNWLGVMPYVIGFTSSLISV. Topologically, residues 161-196 are extracellular; it reads WVISSLAFCDSSINHFFCDTTALLALSCVDTFGTEM. The chain crosses the membrane as a helical span at residues 197–216; the sequence is VSFVLAGFTLLSSLLIITVT. Topologically, residues 217 to 236 are cytoplasmic; sequence YIIIISAILRIQSAAGRQKA. Residues 237 to 257 traverse the membrane as a helical segment; it reads FSTCASHLMAVTIFYGSLIFT. The Extracellular portion of the chain corresponds to 258-270; the sequence is YLQPDNTSSLTQA. The chain crosses the membrane as a helical span at residues 271–291; sequence QVASVFYTIVIPMLNPLIYSL. The Cytoplasmic portion of the chain corresponds to 292 to 310; the sequence is RNKDVKNALLRVIHRKLFP.

Belongs to the G-protein coupled receptor 1 family.

It localises to the cell membrane. Functionally, odorant receptor. The protein is Olfactory receptor 8I2 (OR8I2) of Homo sapiens (Human).